Reading from the N-terminus, the 511-residue chain is Frizzled/smoothened-like sans CRD protein C (511 aa).

The N-terminal stretch at 1-25 (MNQINKFIKNLYLIIITIILIIVIS) is a signal peptide. Topologically, residues 26 to 93 (NDNNGLFING…QWESYFEMSL (68 aa)) are extracellular. N-linked (GlcNAc...) asparagine glycosylation is present at asparagine 51. A helical membrane pass occupies residues 94-114 (IMGSISMFASLFLIITYSPLI). Topologically, residues 115-122 (NKKHTRHT) are cytoplasmic. Residues 123–143 (VGILCMSIGIFFVMVSDGRQL) form a helical membrane-spanning segment. Over 144–172 (WDIESPGEYKKYCPDTGRYARQSDTKCLT) the chain is Extracellular. Residues 173–193 (TGLFFQFGCVTAIGWWSILAV) traverse the membrane as a helical segment. Residues 194-209 (DLWMTIAKKVQTTKKQ) lie on the Cytoplasmic side of the membrane. The chain crosses the membrane as a helical span at residues 210–230 (LLYYLIGINTVSLILTFGPVV). At 231-253 (KNQYGFGNAAIGCWMLDLKYQYG) the chain is on the extracellular side. A helical transmembrane segment spans residues 254–274 (FFWIPVGICLSVGSVFIGLIF). Residues 275–295 (WEIYKISDAVKKRYLKKHIKP) are Cytoplasmic-facing. Residues 296 to 316 (LCLIVLMCLEFLYMFIYYSYI) traverse the membrane as a helical segment. Residues 317–357 (TANQPTYNKHVAEYIMCLIINAANVPGSYTCQLKTVSPTAQ) lie on the Extracellular side of the membrane. The chain crosses the membrane as a helical span at residues 358 to 378 (FLFLIAIRLMGLQGLIFYGLT). Residues 379 to 511 (AATKKVWANS…RVNSPDNLQP (133 aa)) are Cytoplasmic-facing. The tract at residues 430 to 511 (NGYTTGGSDN…RVNSPDNLQP (82 aa)) is disordered. Residues 433–443 (TTGGSDNGVGS) are compositionally biased toward gly residues. The span at 451–460 (KSSSNGGAQD) shows a compositional bias: polar residues. Over residues 461 to 485 (NNNNNNNNNNNNNNNNNNNNNNNNN) the composition is skewed to low complexity. The span at 486–511 (SSSLEISGVESNNSTPRVNSPDNLQP) shows a compositional bias: polar residues.

Belongs to the G-protein coupled receptor Fz/Smo family.

It is found in the membrane. The polypeptide is Frizzled/smoothened-like sans CRD protein C (fscC) (Dictyostelium discoideum (Social amoeba)).